Consider the following 311-residue polypeptide: Pyrimidine-specific ribonucleoside hydrolase RihA (311 aa).

H240 is a catalytic residue.

Belongs to the IUNH family. RihA subfamily.

Hydrolyzes cytidine or uridine to ribose and cytosine or uracil, respectively. The chain is Pyrimidine-specific ribonucleoside hydrolase RihA from Salmonella paratyphi C (strain RKS4594).